Here is a 334-residue protein sequence, read N- to C-terminus: N-acetyl-gamma-glutamyl-phosphate reductase (334 aa).

The active site involves Cys-154.

Belongs to the NAGSA dehydrogenase family. Type 1 subfamily.

Its subcellular location is the cytoplasm. It carries out the reaction N-acetyl-L-glutamate 5-semialdehyde + phosphate + NADP(+) = N-acetyl-L-glutamyl 5-phosphate + NADPH + H(+). Its pathway is amino-acid biosynthesis; L-arginine biosynthesis; N(2)-acetyl-L-ornithine from L-glutamate: step 3/4. Functionally, catalyzes the NADPH-dependent reduction of N-acetyl-5-glutamyl phosphate to yield N-acetyl-L-glutamate 5-semialdehyde. In Yersinia pseudotuberculosis serotype I (strain IP32953), this protein is N-acetyl-gamma-glutamyl-phosphate reductase.